Reading from the N-terminus, the 617-residue chain is MKRDVRILLLGEPKVGKTSLIMSLVGEEFPEQVPLRAEEITIPADVTPEKVPTHIVDYSENEQTDEVLREEIVKANVVCVVYDVTQEETIDKIRTKWIPLVNGGAEKGSKIPIILVGNKSDLRSGSSMETILPIMNQFSEIETCVECSAKNLKNISELFYYAQKAVLHPTAPLYDPEDKQLKAQCVRALSRIFSISDQDNDHILSDAELNCFQKLCFGNPLAPQALEDVKTVVWKNTSDGVQDNGLTLNGFLFLNTLFIQRGRHETTWTILRKFGYDDTLELTDDYLYPVLRVSVGCTTELNHLGHQFLLKLFEKYDEDKDSALSPAELKNLFSVLPYMPWSSTVYSNIPLTDDCYISQHGYLCQWMLLAYLDVHRCLEHLGYLGYPILMEQECQTSAITVTREKALDLDNRQTQRTVFLCKVIGPRGTGKTDFLRAFLQRSTERSDRDPGAPSIYAINTVSIANQDKYLILEEVDVETEFLKAADAACDVACLMYDVSDPDSFNYCASIYKQHYMDSGIPCVVLGSKADLVEVKQHHGMSPSEFCYKHRLPSPLHFSALLTHTHTHIYSKLTWAAMYPHLNGSDMSSTSFWLRVTLGATIAAMLGFALYRAFSRHK.

Residues 1–590 are Cytoplasmic-facing; sequence MKRDVRILLL…LNGSDMSSTS (590 aa). Residues 2–168 enclose the Miro 1 domain; that stretch reads KRDVRILLLG…FYYAQKAVLH (167 aa). G16, K17, T18, and S19 together coordinate GTP. T18 is a binding site for Mg(2+). D57 contributes to the Mg(2+) binding site. Residues S59, N118, K119, D121, A149, and K150 each contribute to the GTP site. 2 EF-hand domains span residues 184–219 and 304–339; these read QCVR…CFGN and LGHQ…LPYM. Positions 197, 199, 201, 208, 317, 319, 321, and 328 each coordinate Ca(2+). In terms of domain architecture, Miro 2 spans 416–578; it reads RTVFLCKVIG…YSKLTWAAMY (163 aa). GTP is bound by residues G428, G430, K431, and T432. Residues T432 and E474 each contribute to the Mg(2+) site. Residues K528 and D530 each coordinate GTP. The helical; Anchor for type IV membrane protein transmembrane segment at 591–613 threads the bilayer; the sequence is FWLRVTLGATIAAMLGFALYRAF. The Mitochondrial intermembrane segment spans residues 614 to 617; that stretch reads SRHK.

It belongs to the mitochondrial Rho GTPase family. In terms of assembly, homodimer.

The protein localises to the mitochondrion outer membrane. It carries out the reaction GTP + H2O = GDP + phosphate + H(+). The enzyme catalyses ATP + H2O = ADP + phosphate + H(+). The catalysed reaction is UTP + H2O = UDP + phosphate + H(+). Atypical mitochondrial nucleoside-triphosphatase (NTPase) involved in mitochondrial trafficking. Probably involved in control of anterograde transport of mitochondria and their subcellular distribution. Can hydrolyze GTP, ATP and UTP. The chain is Mitochondrial Rho GTPase 2 (rhot2) from Danio rerio (Zebrafish).